We begin with the raw amino-acid sequence, 673 residues long: Cell division cycle protein 23 homolog (673 aa).

TPR repeat units lie at residues 86 to 120 (AEMW…VLDN), 159 to 195 (NKEF…YQEH), 232 to 267 (EDVW…EPRI), 332 to 365 (PMII…DPYR), 400 to 433 (WETC…NPGL), 434 to 467 (AALW…DPAD), 469 to 501 (RGWY…KPHD), 502 to 535 (SRLL…GDVE), 539 to 572 (LWSL…VTSA), and 577 to 610 (IYAI…ETLC). Residues 628-673 (SRLPVEEAPGPSNASAAGGQEAMDTEEAPQEGGEEEMSEGEDDFSF) form a disordered region. Low complexity predominate over residues 635–646 (APGPSNASAAGG). Positions 650–673 (MDTEEAPQEGGEEEMSEGEDDFSF) are enriched in acidic residues.

It belongs to the APC8/CDC23 family. The APC/C complex is probably composed of at least 12 subunits: apc-2, apc-10, apc-11, cdc-26, emb-1, emb-27, emb-30, mat-1, mat-2, mat-3, such-1 and gfi-3.

The protein operates within protein modification; protein ubiquitination. Its function is as follows. Probable component of the anaphase promoting complex/cyclosome (APC/C), a cell cycle-regulated E3 ubiquitin ligase that controls progression through mitosis and the G1 phase of the cell cycle. The APC/C complex acts by mediating ubiquitination and subsequent degradation of target proteins. Developmental role in early embryogenesis and the metaphase to anaphase transition in oocyte and spermatocyte meiosis and mitosis in germ cells. Required for embryonic anterior-posterior axis formation. Plays a role in regulating the abundance of glr-1 receptors in postmitotic neurons, which may in turn control animal locomotion. Involved in regulating GABA neurotransmitter release at neuromuscular junctions in GABA motor neurons. The sequence is that of Cell division cycle protein 23 homolog from Caenorhabditis elegans.